We begin with the raw amino-acid sequence, 132 residues long: Small ribosomal subunit protein uS8 (132 aa).

It belongs to the universal ribosomal protein uS8 family. In terms of assembly, part of the 30S ribosomal subunit. Contacts proteins S5 and S12.

Its function is as follows. One of the primary rRNA binding proteins, it binds directly to 16S rRNA central domain where it helps coordinate assembly of the platform of the 30S subunit. The sequence is that of Small ribosomal subunit protein uS8 from Oceanobacillus iheyensis (strain DSM 14371 / CIP 107618 / JCM 11309 / KCTC 3954 / HTE831).